A 369-amino-acid polypeptide reads, in one-letter code: Dual-specificity RNA methyltransferase RlmN (369 aa).

Catalysis depends on E94, which acts as the Proton acceptor. One can recognise a Radical SAM core domain in the interval 113–346; that stretch reads ESEKWTMCLS…CTIRESRGID (234 aa). A disulfide bond links C120 and C351. Residues C127, C131, and C134 each contribute to the [4Fe-4S] cluster site. S-adenosyl-L-methionine-binding positions include 177–178, S209, 232–234, and N308; these read GE and SLH. The S-methylcysteine intermediate role is filled by C351.

It belongs to the radical SAM superfamily. RlmN family. It depends on [4Fe-4S] cluster as a cofactor.

Its subcellular location is the cytoplasm. It carries out the reaction adenosine(2503) in 23S rRNA + 2 reduced [2Fe-2S]-[ferredoxin] + 2 S-adenosyl-L-methionine = 2-methyladenosine(2503) in 23S rRNA + 5'-deoxyadenosine + L-methionine + 2 oxidized [2Fe-2S]-[ferredoxin] + S-adenosyl-L-homocysteine. It catalyses the reaction adenosine(37) in tRNA + 2 reduced [2Fe-2S]-[ferredoxin] + 2 S-adenosyl-L-methionine = 2-methyladenosine(37) in tRNA + 5'-deoxyadenosine + L-methionine + 2 oxidized [2Fe-2S]-[ferredoxin] + S-adenosyl-L-homocysteine. Functionally, specifically methylates position 2 of adenine 2503 in 23S rRNA and position 2 of adenine 37 in tRNAs. m2A2503 modification seems to play a crucial role in the proofreading step occurring at the peptidyl transferase center and thus would serve to optimize ribosomal fidelity. This Helicobacter hepaticus (strain ATCC 51449 / 3B1) protein is Dual-specificity RNA methyltransferase RlmN.